The following is a 59-amino-acid chain: Large ribosomal subunit protein uL30 (59 aa).

This sequence belongs to the universal ribosomal protein uL30 family. Part of the 50S ribosomal subunit.

In Actinobacillus pleuropneumoniae serotype 7 (strain AP76), this protein is Large ribosomal subunit protein uL30.